A 528-amino-acid chain; its full sequence is Capsid scaffolding protein (528 aa).

Active-site charge relay system residues include H46, S116, and H135. The interaction with pAP stretch occupies residues 270–288 (HGNYDAVESATATTAMSNQ). The tract at residues 394–432 (KKRHFQSDSEDELSFPGDPEYTKKRRRHKVDNDDDKEMA) is disordered. The Nuclear localization signal motif lies at 416–422 (KKRRRHK). The interaction with major capsid protein stretch occupies residues 508–528 (SMDLLKLNKKLFVDALNKMDS).

The protein belongs to the herpesviridae capsid scaffolding protein family. In terms of assembly, homomultimer. Interacts with major capsid protein. As to quaternary structure, exists in a monomer-dimer equilibrium with the dimer being the active species. Post-translationally, capsid scaffolding protein is cleaved by assemblin after formation of the spherical procapsid. As a result, the capsid obtains its mature, icosahedral shape. Cleavages occur at two or more sites: release (R-site) and maturation (M-site).

Its subcellular location is the host cytoplasm. The protein resides in the host nucleus. The catalysed reaction is Cleaves -Ala-|-Ser- and -Ala-|-Ala- bonds in the scaffold protein.. In terms of biological role, acts as a scaffold protein by binding major capsid protein in the cytoplasm, inducing the nuclear localization of both proteins. Multimerizes in the nucleus such as major capsid protein forms the icosahedral T=16 capsid. Autocatalytic cleavage releases the assembly protein, and subsequently abolishes interaction with major capsid protein. Cleavages products are evicted from the capsid before or during DNA packaging. Functionally, protease that plays an essential role in virion assembly within the nucleus. Catalyzes the cleavage of the assembly protein after formation of the spherical procapsid. By that cleavage, the capsid matures and gains its icosahedral shape. The cleavage sites seem to include -Ala-Ser-, -Ala-Ala-, as well as Ala-Thr bonds. Assemblin and cleavages products are evicted from the capsid before or during DNA packaging. Its function is as follows. Plays a major role in capsid assembly. Acts as a scaffold protein by binding major capsid protein. Multimerizes in the nucleus such as major capsid protein forms the icosahedral T=16 capsid. Cleaved by assemblin after capsid completion. The cleavages products are evicted from the capsid before or during DNA packaging. This chain is Capsid scaffolding protein (U53), found in Homo sapiens (Human).